We begin with the raw amino-acid sequence, 198 residues long: Large ribosomal subunit protein bL25 (198 aa).

This sequence belongs to the bacterial ribosomal protein bL25 family. CTC subfamily. In terms of assembly, part of the 50S ribosomal subunit; part of the 5S rRNA/L5/L18/L25 subcomplex. Contacts the 5S rRNA. Binds to the 5S rRNA independently of L5 and L18.

Its function is as follows. This is one of the proteins that binds to the 5S RNA in the ribosome where it forms part of the central protuberance. The protein is Large ribosomal subunit protein bL25 of Lysinibacillus sphaericus (strain C3-41).